We begin with the raw amino-acid sequence, 147 residues long: Large ribosomal subunit protein uL15 (147 aa).

Residues 1–42 (MTIKLHHLRPAPGSKSNKIRVGRGEGGKRGKTAGRGTKGTKA) form a disordered region.

This sequence belongs to the universal ribosomal protein uL15 family. In terms of assembly, part of the 50S ribosomal subunit.

In terms of biological role, binds to the 23S rRNA. The polypeptide is Large ribosomal subunit protein uL15 (Rhodococcus erythropolis (strain PR4 / NBRC 100887)).